The primary structure comprises 641 residues: Mannosyl-oligosaccharide 1,2-alpha-mannosidase IB (641 aa).

Threonine 2 is subject to N-acetylthreonine. Residues 2-36 lie on the Cytoplasmic side of the membrane; that stretch reads TTPALLPLSGRRIPPLNLGPPSFPHHRATLRLSEK. Residues 37–57 form a helical; Signal-anchor for type II membrane protein membrane-spanning segment; sequence FILLLILSAFITLCFGAFFFL. Over 58–641 the chain is Lumenal; that stretch reads PDSSKHKRFD…TTLSGNPAVR (584 aa). The tract at residues 153–175 is disordered; the sequence is NKPLPPVPIPNLVGIRGGDPEDN. Cysteine 462 and cysteine 494 are joined by a disulfide. The Proton donor role is filled by glutamate 508. Threonine 619 is a binding site for Ca(2+). N-linked (GlcNAc...) asparagine glycosylation occurs at asparagine 631.

Belongs to the glycosyl hydrolase 47 family. Ca(2+) serves as cofactor. As to expression, highest levels of expression in placenta and testis.

It is found in the golgi apparatus membrane. The enzyme catalyses N(4)-(alpha-D-Man-(1-&gt;2)-alpha-D-Man-(1-&gt;2)-alpha-D-Man-(1-&gt;3)-[alpha-D-Man-(1-&gt;2)-alpha-D-Man-(1-&gt;3)-[alpha-D-Man-(1-&gt;2)-alpha-D-Man-(1-&gt;6)]-alpha-D-Man-(1-&gt;6)]-beta-D-Man-(1-&gt;4)-beta-D-GlcNAc-(1-&gt;4)-beta-D-GlcNAc)-L-asparaginyl-[protein] (N-glucan mannose isomer 9A1,2,3B1,2,3) + 4 H2O = N(4)-(alpha-D-Man-(1-&gt;3)-[alpha-D-Man-(1-&gt;3)-[alpha-D-Man-(1-&gt;6)]-alpha-D-Man-(1-&gt;6)]-beta-D-Man-(1-&gt;4)-beta-D-GlcNAc-(1-&gt;4)-beta-D-GlcNAc)-L-asparaginyl-[protein] (N-glucan mannose isomer 5A1,2) + 4 beta-D-mannose. It catalyses the reaction N(4)-(alpha-D-Man-(1-&gt;2)-alpha-D-Man-(1-&gt;2)-alpha-D-Man-(1-&gt;3)-[alpha-D-Man-(1-&gt;3)-[alpha-D-Man-(1-&gt;2)-alpha-D-Man-(1-&gt;6)]-alpha-D-Man-(1-&gt;6)]-beta-D-Man-(1-&gt;4)-beta-D-GlcNAc-(1-&gt;4)-beta-D-GlcNAc)-L-asparaginyl-[protein] (N-glucan mannose isomer 8A1,2,3B1,3) + 3 H2O = N(4)-(alpha-D-Man-(1-&gt;3)-[alpha-D-Man-(1-&gt;3)-[alpha-D-Man-(1-&gt;6)]-alpha-D-Man-(1-&gt;6)]-beta-D-Man-(1-&gt;4)-beta-D-GlcNAc-(1-&gt;4)-beta-D-GlcNAc)-L-asparaginyl-[protein] (N-glucan mannose isomer 5A1,2) + 3 beta-D-mannose. It functions in the pathway protein modification; protein glycosylation. Its activity is regulated as follows. Inhibited by both 1-deoxymannojirimycin and kifunensine. Involved in the maturation of Asn-linked oligosaccharides. Progressively trim alpha-1,2-linked mannose residues from Man(9)GlcNAc(2) to produce Man(5)GlcNAc(2). The sequence is that of Mannosyl-oligosaccharide 1,2-alpha-mannosidase IB (MAN1A2) from Homo sapiens (Human).